Here is a 403-residue protein sequence, read N- to C-terminus: SEC14-like protein 2 (403 aa).

N6-succinyllysine is present on residues lysine 11 and lysine 51. Residues 76-249 (PPEVVQQYLS…EYGGTMTDPD (174 aa)) form the CRAL-TRIO domain. N6-succinyllysine is present on residues lysine 253 and lysine 257. Residues 275-383 (KQQYEHSVQI…AKKVSFTVEV (109 aa)) form the GOLD domain. The residue at position 393 (lysine 393) is an N6-succinyllysine.

Monomer. The N-terminus is blocked.

The protein resides in the cytoplasm. It localises to the nucleus. Functionally, carrier protein. Binds to some hydrophobic molecules and promotes their transfer between the different cellular sites. Binds with high affinity to alpha-tocopherol. Also binds with a weaker affinity to other tocopherols and to tocotrienols. May have a transcriptional activatory activity via its association with alpha-tocopherol. Probably recognizes and binds some squalene structure, suggesting that it may regulate cholesterol biosynthesis by increasing the transfer of squalene to a metabolic active pool in the cell. The polypeptide is SEC14-like protein 2 (SEC14L2) (Bos taurus (Bovine)).